We begin with the raw amino-acid sequence, 570 residues long: Proline--tRNA ligase (570 aa).

This sequence belongs to the class-II aminoacyl-tRNA synthetase family. ProS type 1 subfamily. Homodimer.

The protein localises to the cytoplasm. The enzyme catalyses tRNA(Pro) + L-proline + ATP = L-prolyl-tRNA(Pro) + AMP + diphosphate. Functionally, catalyzes the attachment of proline to tRNA(Pro) in a two-step reaction: proline is first activated by ATP to form Pro-AMP and then transferred to the acceptor end of tRNA(Pro). As ProRS can inadvertently accommodate and process non-cognate amino acids such as alanine and cysteine, to avoid such errors it has two additional distinct editing activities against alanine. One activity is designated as 'pretransfer' editing and involves the tRNA(Pro)-independent hydrolysis of activated Ala-AMP. The other activity is designated 'posttransfer' editing and involves deacylation of mischarged Ala-tRNA(Pro). The misacylated Cys-tRNA(Pro) is not edited by ProRS. This chain is Proline--tRNA ligase, found in Shewanella pealeana (strain ATCC 700345 / ANG-SQ1).